Here is a 164-residue protein sequence, read N- to C-terminus: Pyruvoyl-dependent arginine decarboxylase (164 aa).

Position 52 is a pyruvic acid (Ser) (S52).

The protein belongs to the PdaD family. The cofactor is pyruvate.

The catalysed reaction is L-arginine + H(+) = agmatine + CO2. This Methanococcus maripaludis (strain C7 / ATCC BAA-1331) protein is Pyruvoyl-dependent arginine decarboxylase.